The chain runs to 108 residues: Protein SMALL AUXIN UP-REGULATED RNA 51 (108 aa).

This sequence belongs to the ARG7 family. Expressed in organ primordia. Hardly observed in leaves.

It localises to the cell membrane. Provide a mechanistic link between auxin and plasma membrane H(+)-ATPases (PM H(+)-ATPases, e.g. AHA1 and AHA2), and triggers PM H(+)-ATPases activity by promoting phosphorylation of their C-terminal autoinhibitory domain as a result of PP2C-D subfamily of type 2C phosphatases inhibition, thus leading to the acidification of the apoplast and the facilitation of solutes and water uptake to drive cell expansion. Triggers plant growth probably by promoting cell elongation. Regulates branch angles and bending. In Arabidopsis thaliana (Mouse-ear cress), this protein is Protein SMALL AUXIN UP-REGULATED RNA 51.